A 578-amino-acid polypeptide reads, in one-letter code: Galectin-3-binding protein (578 aa).

A signal peptide spans 1 to 18 (MAFLWLFSLWLLVPGTQG). The region spanning 24–124 (MRLVNGASAN…HEKDAGVVCS (101 aa)) is the SRCR domain. 3 disulfides stabilise this stretch: cysteine 49–cysteine 113, cysteine 62–cysteine 123, and cysteine 93–cysteine 103. 2 N-linked (GlcNAc...) asparagine glycosylation sites follow: asparagine 69 and asparagine 102. One can recognise a BTB domain in the interval 153–221 (CDLFIQVTGQ…FYSRRIEVTM (69 aa)). A BACK domain is found at 260 to 360 (PLELYAYAQA…VLPQELFELQ (101 aa)). N-linked (GlcNAc...) asparagine glycans are attached at residues asparagine 362 and asparagine 398.

As to quaternary structure, homodimers and homomultimers. The multimers form ring-like structures with a diameter of 30-40 nm. Binds LGALS1 and LGALS3. Binds ITGB1, COL4A1, COL5A1, COL6A1, FN1 and NID. The unglycosylated form interacts with PDE4DIP; this interaction, which is PDE4DIP isoform-specific, may connect a pericentrosomal complex to the gamma-tubulin ring complex (gamma-TuRC) to promote microtubule assembly and acetylation.

The protein resides in the secreted. It localises to the extracellular space. The protein localises to the extracellular matrix. In terms of biological role, promotes integrin-mediated cell adhesion. May stimulate host defense against viruses and tumor cells. The sequence is that of Galectin-3-binding protein (LGALS3BP) from Mesocricetus auratus (Golden hamster).